The chain runs to 310 residues: tRNA uridine(34) hydroxylase (310 aa).

One can recognise a Rhodanese domain in the interval 134-232; that stretch reads DDPDTLLIDT…YFEEVSQTES (99 aa). Cys-192 serves as the catalytic Cysteine persulfide intermediate.

Belongs to the TrhO family.

The catalysed reaction is uridine(34) in tRNA + AH2 + O2 = 5-hydroxyuridine(34) in tRNA + A + H2O. In terms of biological role, catalyzes oxygen-dependent 5-hydroxyuridine (ho5U) modification at position 34 in tRNAs. This chain is tRNA uridine(34) hydroxylase, found in Prochlorococcus marinus (strain MIT 9313).